We begin with the raw amino-acid sequence, 503 residues long: ATP synthase subunit alpha (503 aa).

170-177 (GDRQTGKT) is an ATP binding site.

Belongs to the ATPase alpha/beta chains family. In terms of assembly, F-type ATPases have 2 components, CF(1) - the catalytic core - and CF(0) - the membrane proton channel. CF(1) has five subunits: alpha(3), beta(3), gamma(1), delta(1), epsilon(1). CF(0) has three main subunits: a(1), b(2) and c(9-12). The alpha and beta chains form an alternating ring which encloses part of the gamma chain. CF(1) is attached to CF(0) by a central stalk formed by the gamma and epsilon chains, while a peripheral stalk is formed by the delta and b chains.

Its subcellular location is the cell inner membrane. It carries out the reaction ATP + H2O + 4 H(+)(in) = ADP + phosphate + 5 H(+)(out). Produces ATP from ADP in the presence of a proton gradient across the membrane. The alpha chain is a regulatory subunit. This chain is ATP synthase subunit alpha, found in Pseudothermotoga lettingae (strain ATCC BAA-301 / DSM 14385 / NBRC 107922 / TMO) (Thermotoga lettingae).